Here is an 836-residue protein sequence, read N- to C-terminus: Protein O-mannosyl-transferase TMTC2 (836 aa).

The helical transmembrane segment at 1–21 threads the bilayer; sequence MIAELVSSALGLALYLNTLSA. Residues 22 to 84 lie on the Extracellular side of the membrane; it reads DFCYDDSRAI…LNHAIGGLNP (63 aa). A helical membrane pass occupies residues 85–105; sequence WSYHLVNVLLHAAVTGLFTSF. Topologically, residues 106–107 are cytoplasmic; the sequence is SK. Residues 108 to 128 form a helical membrane-spanning segment; that stretch reads ILLGDGYWTFMAGLMFASHPI. At 129-132 the chain is on the extracellular side; the sequence is HTEA. Residues 133-153 form a helical membrane-spanning segment; the sequence is VAGIVGRADVGASLFFLLSLL. The Cytoplasmic portion of the chain corresponds to 154 to 162; the sequence is CYIKHCSTR. The next 2 membrane-spanning stretches (helical) occupy residues 163–184 and 185–204; these read GYSA…CSML and WKEQ…VFVF. Over 205–220 the chain is Cytoplasmic; that stretch reads HRLKIKQILPTIYKRK. Residues 221 to 241 traverse the membrane as a helical segment; that stretch reads NLSLFLSISLLIFWGSSLLGA. The Extracellular portion of the chain corresponds to 242–312; sequence RLYWMGNKPP…KTVCDWRNLH (71 aa). Residues 313–333 traverse the membrane as a helical segment; it reads TVAFYTGLLLLAYYGLKSPSV. The Cytoplasmic portion of the chain corresponds to 334–399; it reads DRECNGKTVT…TENIVVLSLS (66 aa). The helical transmembrane segment at 400 to 420 threads the bilayer; sequence LLIIPFVPATNLFFYVGFVIA. The Extracellular segment spans residues 421-422; it reads ER. Residues 423–443 traverse the membrane as a helical segment; the sequence is VLYIPSMGFCLLITVGARALY. At 444 to 449 the chain is on the cytoplasmic side; it reads VKVQKR. The helical transmembrane segment at 450-470 threads the bilayer; the sequence is FLKSLIFYATATLIVFYGLKT. The Extracellular segment spans residues 471-836; the sequence is AIRNGDWQNE…EKQGLKTSKT (366 aa). TPR repeat units lie at residues 493–526, 527–560, 561–594, 606–639, 643–676, 677–710, 711–744, 745–778, and 779–812; these read AKAW…RSNM, ADML…RPTL, ASAY…PDEN, TSCL…MPRQ, QSLY…KTDH, IPAH…DPTK, GNCY…DSTE, FDVV…RPNY, and PAAL…KPDD.

This sequence belongs to the TMTC family.

The protein resides in the membrane. Its subcellular location is the endoplasmic reticulum. It carries out the reaction a di-trans,poly-cis-dolichyl beta-D-mannosyl phosphate + L-seryl-[protein] = 3-O-(alpha-D-mannosyl)-L-seryl-[protein] + a di-trans,poly-cis-dolichyl phosphate + H(+). It catalyses the reaction a di-trans,poly-cis-dolichyl beta-D-mannosyl phosphate + L-threonyl-[protein] = 3-O-(alpha-D-mannosyl)-L-threonyl-[protein] + a di-trans,poly-cis-dolichyl phosphate + H(+). Its pathway is protein modification; protein glycosylation. Functionally, transfers mannosyl residues to the hydroxyl group of serine or threonine residues. The 4 members of the TMTC family are O-mannosyl-transferases dedicated primarily to the cadherin superfamily, each member seems to have a distinct role in decorating the cadherin domains with O-linked mannose glycans at specific regions. Also acts as O-mannosyl-transferase on other proteins such as PDIA3. This Homo sapiens (Human) protein is Protein O-mannosyl-transferase TMTC2.